The sequence spans 215 residues: 3-dehydroquinate dehydratase (215 aa).

3-dehydroquinate contacts are provided by residues 27-29 (ELR) and arginine 54. The Proton donor/acceptor role is filled by histidine 112. Catalysis depends on lysine 139, which acts as the Schiff-base intermediate with substrate. Positions 176 and 198 each coordinate 3-dehydroquinate.

The protein belongs to the type-I 3-dehydroquinase family. As to quaternary structure, homodimer.

It carries out the reaction 3-dehydroquinate = 3-dehydroshikimate + H2O. It functions in the pathway metabolic intermediate biosynthesis; chorismate biosynthesis; chorismate from D-erythrose 4-phosphate and phosphoenolpyruvate: step 3/7. Involved in the third step of the chorismate pathway, which leads to the biosynthesis of aromatic amino acids. Catalyzes the cis-dehydration of 3-dehydroquinate (DHQ) and introduces the first double bond of the aromatic ring to yield 3-dehydroshikimate. The sequence is that of 3-dehydroquinate dehydratase from Pyrococcus abyssi (strain GE5 / Orsay).